The following is a 125-amino-acid chain: Gene 61 protein (125 aa).

The protein is Gene 61 protein (61) of Mycobacterium phage D29 (Mycobacteriophage D29).